A 220-amino-acid polypeptide reads, in one-letter code: Protein DGCR6 (220 aa).

The stretch at 76-142 (KSLYNQRLRL…EQRAMDQKIV (67 aa)) forms a coiled coil.

Belongs to the gonadal family. In terms of tissue distribution, found in all tissues examined with highest expression in liver, heart and skeletal muscle. Lower levels in pancreas and placenta. Weak expression in brain.

It localises to the nucleus. May play a role in neural crest cell migration into the third and fourth pharyngeal pouches. The protein is Protein DGCR6 (DGCR6) of Homo sapiens (Human).